We begin with the raw amino-acid sequence, 184 residues long: Photosystem I assembly protein Ycf4 (184 aa).

Helical transmembrane passes span 21–41 (YFWA…GLSS) and 63–83 (IIMT…WLTI).

The protein belongs to the Ycf4 family.

It localises to the plastid. The protein localises to the chloroplast thylakoid membrane. Its function is as follows. Seems to be required for the assembly of the photosystem I complex. In Gracilaria tenuistipitata var. liui (Red alga), this protein is Photosystem I assembly protein Ycf4.